A 650-amino-acid chain; its full sequence is Probable acyl-CoA dehydrogenase FadE10 (650 aa).

The tract at residues 1 to 23 (MAQQTQVTEEQARALAEESRESG) is disordered. A compositionally biased stretch (basic and acidic residues) spans 10–23 (EQARALAEESRESG). Catalysis depends on Glu422, which acts as the Proton acceptor.

This sequence belongs to the acyl-CoA dehydrogenase family. FAD is required as a cofactor.

It catalyses the reaction a 2,3-saturated acyl-CoA + A = a 2,3-dehydroacyl-CoA + AH2. This chain is Probable acyl-CoA dehydrogenase FadE10 (fadE10), found in Mycobacterium tuberculosis (strain CDC 1551 / Oshkosh).